Consider the following 145-residue polypeptide: LIM domain only protein 3 (145 aa).

LIM zinc-binding domains follow at residues 11–73 and 75–137; these read KGCA…LFGV and GNCA…GLMK.

The sequence is that of LIM domain only protein 3 from Danio rerio (Zebrafish).